Consider the following 63-residue polypeptide: Large ribosomal subunit protein bL28 (63 aa).

Positions 11 to 20 (GNNSGASVSH) are enriched in polar residues. Residues 11 to 30 (GNNSGASVSHSNKKTKRKWK) form a disordered region. Residues 21–30 (SNKKTKRKWK) are compositionally biased toward basic residues.

This sequence belongs to the bacterial ribosomal protein bL28 family.

The sequence is that of Large ribosomal subunit protein bL28 from Natranaerobius thermophilus (strain ATCC BAA-1301 / DSM 18059 / JW/NM-WN-LF).